Consider the following 591-residue polypeptide: tRNA 5-methylaminomethyl-2-thiouridine biosynthesis bifunctional protein MnmC (591 aa).

The interval 1–232 (MTPTAPSPLV…KRERLEAWRP (232 aa)) is tRNA (mnm(5)s(2)U34)-methyltransferase. The FAD-dependent cmnm(5)s(2)U34 oxidoreductase stretch occupies residues 247–591 (IGGGIAGAAL…FDSPVTRSRL (345 aa)).

It in the N-terminal section; belongs to the methyltransferase superfamily. tRNA (mnm(5)s(2)U34)-methyltransferase family. This sequence in the C-terminal section; belongs to the DAO family. Requires FAD as cofactor.

The protein resides in the cytoplasm. The enzyme catalyses 5-aminomethyl-2-thiouridine(34) in tRNA + S-adenosyl-L-methionine = 5-methylaminomethyl-2-thiouridine(34) in tRNA + S-adenosyl-L-homocysteine + H(+). In terms of biological role, catalyzes the last two steps in the biosynthesis of 5-methylaminomethyl-2-thiouridine (mnm(5)s(2)U) at the wobble position (U34) in tRNA. Catalyzes the FAD-dependent demodification of cmnm(5)s(2)U34 to nm(5)s(2)U34, followed by the transfer of a methyl group from S-adenosyl-L-methionine to nm(5)s(2)U34, to form mnm(5)s(2)U34. The chain is tRNA 5-methylaminomethyl-2-thiouridine biosynthesis bifunctional protein MnmC from Caulobacter vibrioides (strain ATCC 19089 / CIP 103742 / CB 15) (Caulobacter crescentus).